The chain runs to 428 residues: E3 ubiquitin-protein ligase RNF128 (428 aa).

The N-terminal stretch at 1–38 (MGPPPGIGVYCRGGCGAARLLAWCFLLALSPHAPGSRG) is a signal peptide. N-linked (GlcNAc...) asparagine glycans are attached at residues Asn-48, Asn-59, and Asn-101. Positions 75–183 (SPLEPVSGVL…LKGTKILQSI (109 aa)) constitute a PA domain. Residues 208 to 228 (IFFVSVSFFIITAATVGYFIF) traverse the membrane as a helical segment. The segment at 277–318 (CAVCIELYKPNDLVRILTCNHIFHKTCVDPWLLEHRTCPMCK) adopts an RING-type; atypical zinc-finger fold. Residues 342 to 351 (VSNEASNTAS) show a composition bias toward polar residues. A disordered region spans residues 342 to 428 (VSNEASNTAS…QEAAVREIKS (87 aa)).

In terms of processing, auto-ubiquitinated. Controls the development of T-cell clonal anergy by ubiquitination. As to expression, expressed in brain, kidney, heart, liver, ovary, testis and thymus. Expression increased as early as 4 hours by 5- to 7-fold in anergized cultures as compared to resting or activated cells.

The protein localises to the cytoplasm. Its subcellular location is the endomembrane system. It is found in the cytoskeleton. The protein resides in the perinuclear region. The enzyme catalyses S-ubiquitinyl-[E2 ubiquitin-conjugating enzyme]-L-cysteine + [acceptor protein]-L-lysine = [E2 ubiquitin-conjugating enzyme]-L-cysteine + N(6)-ubiquitinyl-[acceptor protein]-L-lysine.. The protein operates within protein modification; protein ubiquitination. E3 ubiquitin-protein ligase that catalyzes 'Lys-27', 'Lys-48'- or 'Lys-63'-linked polyubiquitin chains formation and plays a role in different biological processes such as modulation of immune response, cytoskeletal dynamics or protein homeostasis. Inhibits IL2 and IL4 transcription, thereby playing an important role in the induction of the anergic phenotype, a long-term stable state of T-lymphocyte unresponsiveness to antigenic stimulation associated with the blockade of interleukin production. Ubiquitinates ARPC5 with 'Lys-48' linkages and COR1A with 'Lys-63' linkages leading to their degradation, down-regulation of these cytoskeletal components results in impaired lamellipodium formation and reduced accumulation of F-actin at the immunological synapse. Functions in the patterning of the dorsal ectoderm; sensitizes ectoderm to respond to neural-inducing signals. Plays a positive role in innate immune response by promoting 'Lys-63'-linked ubiquitination of TBK1 after RNA- or DNA-virus infection. Regulates alveolar macrophage activation and neutrophil infiltration by interacting with TLR4, targeting it for degradation, and inhibiting NF-kappa-B activation, hence decreasing pro-inflammatory cytokines. Negatively regulates the IL-3/STAT5 signaling pathway by facilitating 'Lys-27'-linked polyubiquitination of IL3RA leading to its degradation via lysosomal pathway. Directly regulates the N-glycosylation process in the endoplasmic reticulum by targeting the glycosyl-transferase RPN1 for ubiquitination and degradation. Other substrates targeted for degradation by RNF128 include transmembrane proteins CD40L, CD83 or the tetraspanin CD151. This chain is E3 ubiquitin-protein ligase RNF128 (Rnf128), found in Mus musculus (Mouse).